The sequence spans 464 residues: Argininosuccinate lyase 2 (464 aa).

Belongs to the lyase 1 family. Argininosuccinate lyase subfamily.

It localises to the cytoplasm. The catalysed reaction is 2-(N(omega)-L-arginino)succinate = fumarate + L-arginine. The protein operates within amino-acid biosynthesis; L-arginine biosynthesis; L-arginine from L-ornithine and carbamoyl phosphate: step 3/3. This chain is Argininosuccinate lyase 2, found in Pseudomonas fluorescens (strain Pf0-1).